Reading from the N-terminus, the 322-residue chain is Protein SEC13 homolog (322 aa).

Residue Val2 is modified to N-acetylvaline. WD repeat units lie at residues 11–50, 55–96, 101–144, 148–204, 210–253, and 260–299; these read SHED…QILI, GHEG…WEKS, GHDS…EVKK, AHTI…QWKE, AHSD…SNTW, and KFND…QWVC. The residue at position 184 (Ser184) is a Phosphoserine. Position 309 is a phosphoserine (Ser309).

It belongs to the WD repeat SEC13 family. As to quaternary structure, at the nuclear pore: component of the Y-shaped Nup107-160 subcomplex of the nuclear pore complex (NPC). The Nup107-160 subcomplex includes NUP160, NUP133, NUP107, NUP98, NUP85, NUP43, NUP37, SEH1 and SEC13. At the COPII coat complex: interacts with SEC31A and SEC31B. Interacts with SEC16A. Interacts with SEC16B. Component of the GATOR2 subcomplex, composed of MIOS, SEC13, SEH1L, WDR24 and WDR59. The GATOR2 complex interacts with CASTOR1 and CASTOR2; the interaction is negatively regulated by arginine. The GATOR2 complex interacts with SESN1, SESN2 and SESN3; the interaction is negatively regulated by amino acids.

It is found in the cytoplasmic vesicle. The protein resides in the COPII-coated vesicle membrane. Its subcellular location is the endoplasmic reticulum membrane. It localises to the nucleus. The protein localises to the nuclear pore complex. It is found in the lysosome membrane. With respect to regulation, the GATOR2 complex is negatively regulated by the upstream amino acid sensors CASTOR1 and SESN2, which sequester the GATOR2 complex in absence of amino acids. In the presence of abundant amino acids, GATOR2 is released from CASTOR1 and SESN2 and activated. In terms of biological role, functions as a component of the nuclear pore complex (NPC) and the COPII coat. At the endoplasmic reticulum, SEC13 is involved in the biogenesis of COPII-coated vesicles. Required for the exit of adipsin (CFD/ADN), an adipocyte-secreted protein from the endoplasmic reticulum. Its function is as follows. As a component of the GATOR2 complex, functions as an activator of the amino acid-sensing branch of the mTORC1 signaling pathway. The GATOR2 complex indirectly activates mTORC1 through the inhibition of the GATOR1 subcomplex. GATOR2 probably acts as an E3 ubiquitin-protein ligase toward GATOR1. In the presence of abundant amino acids, the GATOR2 complex mediates ubiquitination of the NPRL2 core component of the GATOR1 complex, leading to GATOR1 inactivation. In the absence of amino acids, GATOR2 is inhibited, activating the GATOR1 complex. Within the GATOR2 complex, SEC13 and SEH1L are required to stabilize the complex. The sequence is that of Protein SEC13 homolog from Homo sapiens (Human).